A 92-amino-acid polypeptide reads, in one-letter code: Acylphosphatase (92 aa).

In terms of domain architecture, Acylphosphatase-like spans 7–92; sequence KTRCTISGRV…DPAPAEFSVG (86 aa). Active-site residues include Arg-22 and Asn-40.

The protein belongs to the acylphosphatase family.

It carries out the reaction an acyl phosphate + H2O = a carboxylate + phosphate + H(+). In Halorhodospira halophila (strain DSM 244 / SL1) (Ectothiorhodospira halophila (strain DSM 244 / SL1)), this protein is Acylphosphatase (acyP).